A 95-amino-acid polypeptide reads, in one-letter code: Pyruvate synthase subunit PorD (95 aa).

2 4Fe-4S ferredoxin-type domains span residues 34-63 (FRPV…PREN) and 64-93 (GFFE…MILE). Residues cysteine 43, cysteine 46, cysteine 49, cysteine 53, cysteine 73, cysteine 76, cysteine 79, and cysteine 83 each coordinate [4Fe-4S] cluster.

In terms of assembly, heterotetramer of one alpha, one beta, one delta and one gamma chain. [4Fe-4S] cluster is required as a cofactor.

The chain is Pyruvate synthase subunit PorD (porD) from Methanosarcina barkeri (strain Fusaro / DSM 804).